We begin with the raw amino-acid sequence, 235 residues long: Aspartate/glutamate leucyltransferase (235 aa).

It belongs to the R-transferase family. Bpt subfamily.

It localises to the cytoplasm. It carries out the reaction N-terminal L-glutamyl-[protein] + L-leucyl-tRNA(Leu) = N-terminal L-leucyl-L-glutamyl-[protein] + tRNA(Leu) + H(+). The enzyme catalyses N-terminal L-aspartyl-[protein] + L-leucyl-tRNA(Leu) = N-terminal L-leucyl-L-aspartyl-[protein] + tRNA(Leu) + H(+). In terms of biological role, functions in the N-end rule pathway of protein degradation where it conjugates Leu from its aminoacyl-tRNA to the N-termini of proteins containing an N-terminal aspartate or glutamate. This chain is Aspartate/glutamate leucyltransferase, found in Pseudomonas savastanoi pv. phaseolicola (strain 1448A / Race 6) (Pseudomonas syringae pv. phaseolicola (strain 1448A / Race 6)).